A 907-amino-acid polypeptide reads, in one-letter code: Probable ubiquitin-conjugating enzyme E2 24 (907 aa).

Disordered stretches follow at residues 1-23 and 485-509; these read MEMS…EHEE and SSTV…EASS. Polar residues predominate over residues 495–509; that stretch reads QDLSQKISQSDEASS. Residues 662–822 form the UBC core domain; the sequence is SWVKKVQQEW…AFLITCKSMI (161 aa). Cysteine 748 serves as the catalytic Glycyl thioester intermediate.

The protein belongs to the ubiquitin-conjugating enzyme family. Interacts with PHO1. Interacts with NLA. Expressed in the vascular tissues of cotyledons, leaves, roots, sepals, filaments, anthers and junctions between the inflorescence stems and siliques.

It localises to the golgi apparatus membrane. Its subcellular location is the endoplasmic reticulum membrane. The catalysed reaction is S-ubiquitinyl-[E1 ubiquitin-activating enzyme]-L-cysteine + [E2 ubiquitin-conjugating enzyme]-L-cysteine = [E1 ubiquitin-activating enzyme]-L-cysteine + S-ubiquitinyl-[E2 ubiquitin-conjugating enzyme]-L-cysteine.. Its pathway is protein modification; protein ubiquitination. Functionally, E2 ubiquitin-protein ligase that mediates E1-dependent protein ubiquitination. Mediates PHO1 degradation through multivesicular body-mediated vacuolar proteolysis in response to inorganic phosphate (Pi) availability. Negatively regulates the protein abundance of PHF1 and PHT1s under Pi-sufficient conditions by facilitating the degradation of PHT1 proteins at the endomembrane. Functions cooperatively with NLA to regulate the abundance of the inorganic phosphate (Pi) transporters PHT1-1, PHT1-2 and PHT1-3 in different subcellular compartments. Regulates Pi homeostasis by mediating, cooperatively with NLA, polyubiquitination of PHT1-4 and its targeting for degradation. This Arabidopsis thaliana (Mouse-ear cress) protein is Probable ubiquitin-conjugating enzyme E2 24.